We begin with the raw amino-acid sequence, 202 residues long: Peptide methionine sulfoxide reductase A3 (202 aa).

A disordered region spans residues 1–34 (MNILNRLGLGSSGQTNMDPSPIAQGNDDDTPAPG). The residue at position 189 (serine 189) is a Phosphoserine.

It belongs to the MsrA Met sulfoxide reductase family. Expressed in rosette and cauline leaves, and at lower levels in roots, stems and flowers (at protein level).

Its subcellular location is the cytoplasm. The protein resides in the cytosol. The enzyme catalyses L-methionyl-[protein] + [thioredoxin]-disulfide + H2O = L-methionyl-(S)-S-oxide-[protein] + [thioredoxin]-dithiol. It catalyses the reaction [thioredoxin]-disulfide + L-methionine + H2O = L-methionine (S)-S-oxide + [thioredoxin]-dithiol. Catalyzes the reduction of methionine sulfoxide (MetSO) to methionine in proteins. Plays a protective role against oxidative stress by restoring activity to proteins that have been inactivated by methionine oxidation. May prevent cellular oxidative damage due to light exposure. MSRA family specifically reduces the MetSO S-enantiomer. The chain is Peptide methionine sulfoxide reductase A3 (MSRA3) from Arabidopsis thaliana (Mouse-ear cress).